The following is a 392-amino-acid chain: Chalcone synthase-like protein 1 (392 aa).

Residue Cys166 is part of the active site.

Belongs to the thiolase-like superfamily. Chalcone/stilbene synthases family. In terms of tissue distribution, expressed at the same level in leaves and in glandular trichomes.

Its subcellular location is the cytoplasm. Functionally, chalcone synthase that may use malonyl-CoA and hexanoyl-CoA as substrates but without producing olivetol or olivetolic acid. The protein is Chalcone synthase-like protein 1 (CAN383) of Cannabis sativa (Hemp).